Here is a 709-residue protein sequence, read N- to C-terminus: Polyribonucleotide nucleotidyltransferase (709 aa).

Residues Asp-487 and Asp-493 each contribute to the Mg(2+) site. The KH domain maps to 554-613 (PRIHTMKISSDKIKDVIGKGGAVIRALCEETGTTIEIEDDGTIKIAATEGAAAKEAIRRI). The S1 motif domain maps to 623–691 (GKIYPGKVMR…RQGRIRLSIK (69 aa)).

Belongs to the polyribonucleotide nucleotidyltransferase family. In terms of assembly, component of the RNA degradosome, which is a multiprotein complex involved in RNA processing and mRNA degradation. Mg(2+) serves as cofactor.

It is found in the cytoplasm. It carries out the reaction RNA(n+1) + phosphate = RNA(n) + a ribonucleoside 5'-diphosphate. Its function is as follows. Involved in mRNA degradation. Catalyzes the phosphorolysis of single-stranded polyribonucleotides processively in the 3'- to 5'-direction. This chain is Polyribonucleotide nucleotidyltransferase, found in Aliivibrio salmonicida (strain LFI1238) (Vibrio salmonicida (strain LFI1238)).